Here is a 317-residue protein sequence, read N- to C-terminus: Peptidyl-prolyl cis-trans isomerase CYP26-2, chloroplastic (317 aa).

A disordered region spans residues 1–37 (MMQPNAKLLSPSAKFLPSPIEPPQHNRRTTVGAPPSL). The 217-residue stretch at 95 to 311 (FIDVSIDGEP…SKVVVTNCGL (217 aa)) folds into the PPIase cyclophilin-type domain.

Belongs to the cyclophilin-type PPIase family. Ubiquitous. Lower levels of expression in roots.

It localises to the plastid. The protein localises to the chloroplast thylakoid. The catalysed reaction is [protein]-peptidylproline (omega=180) = [protein]-peptidylproline (omega=0). Functionally, PPIases accelerate the folding of proteins. It catalyzes the cis-trans isomerization of proline imidic peptide bonds in oligopeptides. The polypeptide is Peptidyl-prolyl cis-trans isomerase CYP26-2, chloroplastic (CYP26-2) (Arabidopsis thaliana (Mouse-ear cress)).